The following is a 698-amino-acid chain: Polyribonucleotide nucleotidyltransferase (698 aa).

Asp490 and Asp496 together coordinate Mg(2+). The KH domain occupies 557–616; that stretch reads PKVVTMTIKPDKIRDVIGPGGKKINEIIDETGVKLDIEQDGTIFIGAVDQAMINRAREII. In terms of domain architecture, S1 motif spans 626-694; sequence GQTYQATVKR…KQGRVNASHR (69 aa).

This sequence belongs to the polyribonucleotide nucleotidyltransferase family. Requires Mg(2+) as cofactor.

The protein resides in the cytoplasm. The catalysed reaction is RNA(n+1) + phosphate = RNA(n) + a ribonucleoside 5'-diphosphate. Functionally, involved in mRNA degradation. Catalyzes the phosphorolysis of single-stranded polyribonucleotides processively in the 3'- to 5'-direction. The chain is Polyribonucleotide nucleotidyltransferase from Staphylococcus aureus (strain bovine RF122 / ET3-1).